A 183-amino-acid polypeptide reads, in one-letter code: MESTINIENVVASTKLADEFDLVKIESELEGAEYNKEKFPGLVYRVKSPKAAFLIFTSGKVVCTGAKNVEDVRTVITNMARTLKSIGFDNINLEPEIHVQNIVASADLKTDLNLNAIALGLGLENIEYEPEQFPGLVYRIKQPKVVVLIFSSGKLVVTGGKSPEECEEGVRIVRQQLENLGLL.

2 repeat units span residues 7–83 (IENV…ARTL) and 99–177 (VQNI…RQQL).

It belongs to the TBP family.

In terms of biological role, general factor that plays a role in the activation of archaeal genes transcribed by RNA polymerase. Binds specifically to the TATA box promoter element which lies close to the position of transcription initiation. The protein is TATA-box-binding protein of Methanothrix thermoacetophila (strain DSM 6194 / JCM 14653 / NBRC 101360 / PT) (Methanosaeta thermophila).